The primary structure comprises 389 residues: Na(+)/H(+) antiporter NhaA (389 aa).

11 consecutive transmembrane segments (helical) span residues 24 to 44 (ILLI…AGPA), 56 to 76 (LSIE…FVGL), 94 to 114 (LLPI…HYTL), 122 to 142 (AGTG…LALL), 152 to 172 (VFLT…IAMF), 176 to 196 (QFSL…LVLN), 216 to 236 (FLML…AFAI), 259 to 279 (PVAF…VIGS), 291 to 311 (LGII…LSFV), 326 to 346 (WTHI…SIFI), and 363 to 383 (MAIL…LSFF).

This sequence belongs to the NhaA Na(+)/H(+) (TC 2.A.33) antiporter family.

The protein localises to the cell inner membrane. The enzyme catalyses Na(+)(in) + 2 H(+)(out) = Na(+)(out) + 2 H(+)(in). In terms of biological role, na(+)/H(+) antiporter that extrudes sodium in exchange for external protons. This is Na(+)/H(+) antiporter NhaA from Dechloromonas aromatica (strain RCB).